The following is a 311-amino-acid chain: MGIMAVLMLPLLLLGVSGLLFIYQEASRLWSKSAVQNKVVVITDALSGLGKECARVFNAGGARLVLCGKNWEGLESLYAALTSVADPSKTFTPKLVLLDLSDISCVEDVAKEVLDCYGCVDILINNASVKVKGPAHKISLELDKKIMDANYFGPITFTKVLLPNMISRRTGQIVLVNNIQAKFGIPFRTAYAASKHAVMGFFDCLRAEVEEYDVVVSTVSPTFIRSYQAYPEQRNWGSSICKFFCRKLTYGVHPVEVAEEVMRTVRRKKQEVFMANPVPKAAVFIRTFFPELFFAVVACGVKEKLSVPEEG.

The signal sequence occupies residues 1–18 (MGIMAVLMLPLLLLGVSG). NAD(+) contacts are provided by Ser47, Leu49, Tyr191, Lys195, and Ser226. Tyr191 functions as the Proton acceptor in the catalytic mechanism.

Belongs to the short-chain dehydrogenases/reductases (SDR) family. In terms of tissue distribution, expressed in skeletal muscle, cardiac muscle and skin.

It is found in the sarcoplasmic reticulum membrane. The catalysed reaction is all-trans-retinol + NAD(+) = all-trans-retinal + NADH + H(+). In terms of biological role, NADH-dependent oxidoreductase which catalyzes the oxidation of all-trans-retinol to all-trans-retinal. Plays a role in the regulation of cardiac and skeletal muscle metabolic functions. Maintains Ca(2+) intracellular homeostasis by repressing Ca(2+) release from the sarcoplasmic reticulum (SR) in myotubes, possibly through local alternations in NAD/NADH or retinol/retinal. Also plays a role in Ca(2+) homeostasis by controlling Ca(2+) overload in the cytosol and the SR in myotubes. Involved in glucose uptake into skeletal muscles and muscle performance by activating PI3K and mTORC2-mediated AKT1 phosphorylation signaling pathways, possibly through the action of its downstream catalytic product all-trans-retinoic acid. The polypeptide is Dehydrogenase/reductase SDR family member 7C (Rattus norvegicus (Rat)).